We begin with the raw amino-acid sequence, 106 residues long: Toxin-like structure LSTX-D7 (106 aa).

A signal peptide spans 1–20 (MMKVLVVFALLVTLISYSSS). A propeptide spanning residues 21 to 41 (EGIDDLEADELLSLMANEQTR) is cleaved from the precursor. 4 disulfides stabilise this stretch: Cys45-Cys60, Cys52-Cys69, Cys59-Cys85, and Cys71-Cys83.

It belongs to the neurotoxin 19 (CSTX) family. 02 (D7) subfamily. In terms of tissue distribution, expressed by the venom gland.

The protein resides in the secreted. The protein is Toxin-like structure LSTX-D7 of Lycosa singoriensis (Wolf spider).